Consider the following 66-residue polypeptide: Large ribosomal subunit protein bL33c (66 aa).

This sequence belongs to the bacterial ribosomal protein bL33 family.

It localises to the plastid. It is found in the chloroplast. The chain is Large ribosomal subunit protein bL33c from Coffea arabica (Arabian coffee).